We begin with the raw amino-acid sequence, 98 residues long: Large ribosomal subunit protein bL21 (98 aa).

It belongs to the bacterial ribosomal protein bL21 family. Part of the 50S ribosomal subunit. Contacts protein L20.

This protein binds to 23S rRNA in the presence of protein L20. This Novosphingobium aromaticivorans (strain ATCC 700278 / DSM 12444 / CCUG 56034 / CIP 105152 / NBRC 16084 / F199) protein is Large ribosomal subunit protein bL21.